Here is a 375-residue protein sequence, read N- to C-terminus: Alcohol dehydrogenase 3, mitochondrial (375 aa).

A mitochondrion-targeting transit peptide spans 1–24 (MLRTSTLFTRRVQPSLFSRNILRL). Cys71 contributes to the Zn(2+) binding site. NAD(+)-binding residues include His72, Thr73, and His76. His94, Glu95, Cys125, Cys128, Cys131, Cys139, and Cys181 together coordinate Zn(2+). Gly208, Gly209, Leu210, Asp229, Lys234, Phe249, Val296, Ser321, Val323, and Arg368 together coordinate NAD(+).

This sequence belongs to the zinc-containing alcohol dehydrogenase family. Homotetramer. It depends on Zn(2+) as a cofactor.

Its subcellular location is the mitochondrion matrix. It is found in the mitochondrion inner membrane. The enzyme catalyses a primary alcohol + NAD(+) = an aldehyde + NADH + H(+). It catalyses the reaction a secondary alcohol + NAD(+) = a ketone + NADH + H(+). The catalysed reaction is ethanol + NAD(+) = acetaldehyde + NADH + H(+). It carries out the reaction butan-1-ol + NAD(+) = butanal + NADH + H(+). The enzyme catalyses hexan-1-ol + NAD(+) = hexanal + NADH + H(+). Functionally, mitochondrial isozyme that reduces acetaldehyde to ethanol during the fermentation of glucose. Involved in the shuttling of mitochondrial reducing equivalents to the cytosol, where the redox balance is restored by NADH dehydrogenases on the external side of the mitochondrial inner membrane. Shows a high affinity for alcohols with a double bond conjugated to the alcohol group. This chain is Alcohol dehydrogenase 3, mitochondrial (ADH3), found in Saccharomyces cerevisiae (strain ATCC 204508 / S288c) (Baker's yeast).